The following is a 358-amino-acid chain: Cytochrome c peroxidase, mitochondrial (358 aa).

Residues 1–38 constitute a mitochondrion transit peptide; it reads MAASRTATRTLRALRTSTRPALTAAPRAAFRQGGRRLY. The active-site Proton acceptor is the His-119. A disordered region spans residues 192-214; it reads PYRPGRQDRDAAGCTPDGRLPDA. Residue His-242 participates in heme b binding. The active-site Tryptophan radical intermediate is the Trp-258.

This sequence belongs to the peroxidase family. Cytochrome c peroxidase subfamily. Forms a one-to-one complex with cytochrome c. Requires heme b as cofactor.

Its subcellular location is the mitochondrion matrix. It localises to the mitochondrion intermembrane space. It catalyses the reaction 2 Fe(II)-[cytochrome c] + H2O2 + 2 H(+) = 2 Fe(III)-[cytochrome c] + 2 H2O. Functionally, destroys radicals which are normally produced within the cells and which are toxic to biological systems. This is Cytochrome c peroxidase, mitochondrial (ccp-1) from Neurospora crassa (strain ATCC 24698 / 74-OR23-1A / CBS 708.71 / DSM 1257 / FGSC 987).